A 174-amino-acid polypeptide reads, in one-letter code: MALLEIIHYPSKILRTISKEVVSFDAKLHQQLDDMHETMIASEGIGLAAIQVGLPLRMLIINLPREDGVQHKEDCLEIINPKFIETGGSMMYREGCLSVPGFYEEVERFEKVKIEYQNRFAEVKVLEASELLAVAIQHEIDHLNGVLFVDKLSILKRKKFEKELKELQKQQKHK.

2 residues coordinate Fe cation: Cys-96 and His-138. Residue Glu-139 is part of the active site. His-142 provides a ligand contact to Fe cation.

Belongs to the polypeptide deformylase family. The cofactor is Fe(2+).

It carries out the reaction N-terminal N-formyl-L-methionyl-[peptide] + H2O = N-terminal L-methionyl-[peptide] + formate. In terms of biological role, removes the formyl group from the N-terminal Met of newly synthesized proteins. Requires at least a dipeptide for an efficient rate of reaction. N-terminal L-methionine is a prerequisite for activity but the enzyme has broad specificity at other positions. The chain is Peptide deformylase from Helicobacter pylori (strain HPAG1).